Here is a 351-residue protein sequence, read N- to C-terminus: Histidine protein kinase SaeS (351 aa).

2 helical membrane-spanning segments follow: residues 9–29 (IIIGVVSSILLTSTILAIAYI) and 40–60 (TLTLTTIITSCLTLLICSIFI). Positions 61 to 114 (NPLIQKIKQFNIKTKQFANGNYASNDKTFNSPKEIYELNQSFNKMASEITQQMN) constitute an HAMP domain. One can recognise a Histidine kinase domain in the interval 129–348 (NLAHDLKTPL…TMTVTLHKLD (220 aa)). His132 carries the post-translational modification Phosphohistidine; by autocatalysis.

In terms of processing, autophosphorylated.

The protein localises to the cell membrane. The catalysed reaction is ATP + protein L-histidine = ADP + protein N-phospho-L-histidine.. In terms of biological role, member of the two-component regulatory system SaeR/SaeS involved in the regulation of staphylococcal virulence factors in a strain-dependent fashion. Probably functions as a membrane-associated protein kinase that upon sensing the appropriate signal, autophosphorylates and in turn activates the cytosolic response regulator SaeR. In Staphylococcus aureus (strain USA300), this protein is Histidine protein kinase SaeS (saeS).